We begin with the raw amino-acid sequence, 338 residues long: Flap endonuclease 1 (338 aa).

The segment at 1 to 98 is N-domain; the sequence is MGTDIGDLLQ…ETLNRRKEVR (98 aa). Mg(2+) contacts are provided by aspartate 27, aspartate 80, glutamate 152, glutamate 154, aspartate 173, aspartate 175, and aspartate 236. An I-domain region spans residues 116–257; the sequence is AAYKYAQASS…TALKLIKKHG (142 aa). Positions 330–338 are interaction with PCNA; sequence RQQTLDQWF.

The protein belongs to the XPG/RAD2 endonuclease family. FEN1 subfamily. In terms of assembly, interacts with PCNA. PCNA stimulates the nuclease activity without altering cleavage specificity. Mg(2+) is required as a cofactor.

Its function is as follows. Structure-specific nuclease with 5'-flap endonuclease and 5'-3' exonuclease activities involved in DNA replication and repair. During DNA replication, cleaves the 5'-overhanging flap structure that is generated by displacement synthesis when DNA polymerase encounters the 5'-end of a downstream Okazaki fragment. Binds the unpaired 3'-DNA end and kinks the DNA to facilitate 5' cleavage specificity. Cleaves one nucleotide into the double-stranded DNA from the junction in flap DNA, leaving a nick for ligation. Also involved in the base excision repair (BER) pathway. Acts as a genome stabilization factor that prevents flaps from equilibrating into structures that lead to duplications and deletions. Also possesses 5'-3' exonuclease activity on nicked or gapped double-stranded DNA. The sequence is that of Flap endonuclease 1 from Methanosarcina barkeri (strain Fusaro / DSM 804).